The sequence spans 286 residues: CDP-diacylglycerol--serine O-phosphatidyltransferase (286 aa).

5 helical membrane-spanning segments follow: residues 15–35 (ILPS…IKFA), 95–115 (MLSK…CVVL), 135–155 (EFFV…LLAL), 167–187 (VWFL…GIPM), and 207–227 (LAIC…VIII).

It belongs to the CDP-alcohol phosphatidyltransferase class-I family.

It is found in the cell membrane. It catalyses the reaction a CDP-1,2-diacyl-sn-glycerol + L-serine = a 1,2-diacyl-sn-glycero-3-phospho-L-serine + CMP + H(+). This Mycobacterium bovis (strain ATCC BAA-935 / AF2122/97) protein is CDP-diacylglycerol--serine O-phosphatidyltransferase (pssA).